Reading from the N-terminus, the 156-residue chain is Small ribosomal subunit protein uS7 (156 aa).

Belongs to the universal ribosomal protein uS7 family. In terms of assembly, part of the 30S ribosomal subunit. Contacts proteins S9 and S11.

One of the primary rRNA binding proteins, it binds directly to 16S rRNA where it nucleates assembly of the head domain of the 30S subunit. Is located at the subunit interface close to the decoding center, probably blocks exit of the E-site tRNA. This is Small ribosomal subunit protein uS7 from Mycobacterium avium (strain 104).